Here is a 610-residue protein sequence, read N- to C-terminus: ABC transporter ATP-binding protein/permease wht-3 (610 aa).

The 236-residue stretch at 42-277 (VKTRKKLFSK…FADCGHPIPK (236 aa)) folds into the ABC transporter domain. Residue 74–81 (GASGAGKT) participates in ATP binding. A run of 5 helical transmembrane segments spans residues 396–416 (ALYFLIAELTFSTMFGIMTFM), 446–466 (LPLFTIDGALMIVISYWMIGL), 477–497 (ILISVLVEQSATSCGLFLACL), 503–523 (LAIAFAVPASGLFALLSGLYG), and 584–604 (VIGLCSIVIFFYLAGYIALFI).

This sequence belongs to the ABC transporter superfamily. ABCG family. Eye pigment precursor importer (TC 3.A.1.204) subfamily.

Its subcellular location is the membrane. In terms of biological role, required for efficient RNA interference (RNAi) of pop-1 indicating a role in the germline development. In Caenorhabditis elegans, this protein is ABC transporter ATP-binding protein/permease wht-3 (wht-3).